Consider the following 343-residue polypeptide: Ferredoxin--NADP reductase (343 aa).

D31, K39, Y43, V83, I118, D285, and S326 together coordinate FAD.

It belongs to the ferredoxin--NADP reductase type 2 family. Homodimer. Requires FAD as cofactor.

The enzyme catalyses 2 reduced [2Fe-2S]-[ferredoxin] + NADP(+) + H(+) = 2 oxidized [2Fe-2S]-[ferredoxin] + NADPH. This is Ferredoxin--NADP reductase from Staphylococcus saprophyticus subsp. saprophyticus (strain ATCC 15305 / DSM 20229 / NCIMB 8711 / NCTC 7292 / S-41).